Consider the following 614-residue polypeptide: NADH-quinone oxidoreductase subunit L (614 aa).

A run of 15 helical transmembrane segments spans residues 1 to 21, 33 to 53, 79 to 99, 136 to 156, 168 to 188, 207 to 227, 247 to 267, 271 to 291, 327 to 347, 372 to 392, 410 to 430, 455 to 475, 492 to 512, 533 to 553, and 593 to 613; these read MSIIFFIILFPLIGFLFLSTI, IGIFSIFISFFITCFYGVSIL, FFLDGLSLSMLFVITGVGLLI, FLFMYLGWEGVSVCSYLLIGF, FKAFILTRVSDVFLMIGMFLI, LNVENFYYLDYITLFLLLGVI, TPVSALIHAATMVTAGVYLIA, FLFLLTPGILYLVGLIGTLTI, AWSAAITHLIMHAIFKALLFL, LPFLYISFIVGGASLVSFPLI, GCIDFFIIGLFCSFLTAIYTF, IPLFVLLLLSTVFGSYISPPL, FEIICSILSLSGIYLSYYIWI, FFLKGWGFNWFYKISFVYFYL, and YVASMILGINFIFLLMLFFYF.

This sequence belongs to the complex I subunit 5 family. In terms of assembly, composed of 13 different subunits. Subunits NuoA, H, J, K, L, M, N constitute the membrane sector of the complex.

The protein resides in the cell membrane. It carries out the reaction a quinone + NADH + 5 H(+)(in) = a quinol + NAD(+) + 4 H(+)(out). NDH-1 shuttles electrons from NADH, via FMN and iron-sulfur (Fe-S) centers, to quinones in the respiratory chain. Couples the redox reaction to proton translocation (for every two electrons transferred, four hydrogen ions are translocated across the cytoplasmic membrane), and thus conserves the redox energy in a proton gradient. This Buchnera aphidicola subsp. Acyrthosiphon pisum (strain APS) (Acyrthosiphon pisum symbiotic bacterium) protein is NADH-quinone oxidoreductase subunit L (nuoL).